The sequence spans 173 residues: 16S rRNA aminocarboxypropyltransferase (173 aa).

Residues Thr-25, Leu-72, Leu-96, and Ser-115 each contribute to the S-adenosyl-L-methionine site.

The protein belongs to the TDD superfamily. TSR3 family.

It localises to the cytoplasm. The catalysed reaction is an N(1)-methylpseudouridine in rRNA + S-adenosyl-L-methionine = N(1)-methyl-N(3)-[(3S)-3-amino-3-carboxypropyl]pseudouridine in rRNA + S-methyl-5'-thioadenosine + H(+). Its function is as follows. Aminocarboxypropyltransferase that catalyzes the aminocarboxypropyl transfer on pseudouridine corresponding to position 914 in M.jannaschii 16S rRNA. It constitutes the last step in biosynthesis of the hypermodified N1-methyl-N3-(3-amino-3-carboxypropyl) pseudouridine (m1acp3-Psi). This Methanococcoides burtonii (strain DSM 6242 / NBRC 107633 / OCM 468 / ACE-M) protein is 16S rRNA aminocarboxypropyltransferase.